The chain runs to 146 residues: Horcolin (146 aa).

The disordered stretch occupies residues 1–21 (MSKPVKIGPWGGNGGSERDVQ). The Jacalin-type lectin domain occupies 4 to 146 (PVKIGPWGGN…LDAIGFYITP (143 aa)).

The protein belongs to the jacalin lectin family.

Its subcellular location is the secreted. The protein resides in the extracellular space. It localises to the apoplast. Functionally, mannose-specific lectin. Has a weak agglutinating activity against rabbit erythrocytes. In Hordeum vulgare (Barley), this protein is Horcolin.